Consider the following 492-residue polypeptide: Probable endopolygalacturonase D (492 aa).

The first 16 residues, 1–16 (MKRSALILSFLPLVFG), serve as a signal peptide directing secretion. Cysteines 151 and 166 form a disulfide. PbH1 repeat units lie at residues 216–238 (GTSVTITGVEGHVIDGNGAAYWD), 258–280 (MYNSRIENLYIQNWPVHCFEIES), 281–319 (TEHLTVSGLTLNNSAGDAANSKSDGDPAAHNSDGFDIKE), and 320–341 (SSYFTLENTWVHNQDDCVAVTS). An N-linked (GlcNAc...) asparagine glycan is attached at Asn292. Asp334 serves as the catalytic Proton donor. The cysteines at positions 336 and 352 are disulfide-linked. His356 is an active-site residue. PbH1 repeat units lie at residues 371 to 392 (VNGVTFSNSQVISSQNGCRIKT), 400 to 422 (VYNIRYENITLSDISDYGIDVQQ), and 434 to 478 (TNGV…SITG). Asn407 and Asn441 each carry an N-linked (GlcNAc...) asparagine glycan. 2 cysteine pairs are disulfide-bonded: Cys461/Cys466 and Cys484/Cys491.

The protein belongs to the glycosyl hydrolase 28 family.

Its subcellular location is the secreted. It carries out the reaction (1,4-alpha-D-galacturonosyl)n+m + H2O = (1,4-alpha-D-galacturonosyl)n + (1,4-alpha-D-galacturonosyl)m.. Its function is as follows. Involved in maceration and soft-rotting of plant tissue. Hydrolyzes the 1,4-alpha glycosidic bonds of de-esterified pectate in the smooth region of the plant cell wall. The chain is Probable endopolygalacturonase D (pgaD) from Aspergillus oryzae (strain ATCC 42149 / RIB 40) (Yellow koji mold).